The chain runs to 179 residues: Small ribosomal subunit protein uS5 (179 aa).

In terms of domain architecture, S5 DRBM spans 22–85; that stretch reads MIEKLVAVNR…EYARKRMANV (64 aa).

Belongs to the universal ribosomal protein uS5 family. As to quaternary structure, part of the 30S ribosomal subunit. Contacts proteins S4 and S8.

Its function is as follows. With S4 and S12 plays an important role in translational accuracy. Functionally, located at the back of the 30S subunit body where it stabilizes the conformation of the head with respect to the body. The sequence is that of Small ribosomal subunit protein uS5 from Xylella fastidiosa (strain M12).